Here is an 860-residue protein sequence, read N- to C-terminus: Leucine--tRNA ligase (860 aa).

The 'HIGH' region motif lies at 42–52 (PYPSGRLHMGH). The 'KMSKS' region motif lies at 619–623 (KMSKS). K622 serves as a coordination point for ATP.

The protein belongs to the class-I aminoacyl-tRNA synthetase family.

The protein localises to the cytoplasm. The catalysed reaction is tRNA(Leu) + L-leucine + ATP = L-leucyl-tRNA(Leu) + AMP + diphosphate. The polypeptide is Leucine--tRNA ligase (Salmonella paratyphi B (strain ATCC BAA-1250 / SPB7)).